Reading from the N-terminus, the 245-residue chain is tRNA pseudouridine synthase A (245 aa).

Residue D52 is the Nucleophile of the active site. Y111 contacts substrate.

The protein belongs to the tRNA pseudouridine synthase TruA family. Homodimer.

The enzyme catalyses uridine(38/39/40) in tRNA = pseudouridine(38/39/40) in tRNA. In terms of biological role, formation of pseudouridine at positions 38, 39 and 40 in the anticodon stem and loop of transfer RNAs. The protein is tRNA pseudouridine synthase A of Xanthobacter autotrophicus (strain ATCC BAA-1158 / Py2).